Consider the following 416-residue polypeptide: MEKMNITNQQHDAFVKSHPNGDLLQLSKWADTKKLTGWYSRRIAVGENGQIKGVGQLLFKKIPKLPYTLCYVSRGFVADYNNKEVLEALLSYAKEVAKDEKSYAIKIDPDVEVDKGAEALKNLRELGFKHKGFKEGLSKDYIQPRMTMITPIDKTDDELVQSFERRNRSKVRLALKRGTKVERSNREGLKIFANLMKITGERDGFLTRDISYFENIYDALHEDGDAELFLVKLEPKPVLDTVNQDLEAQLAEKEKLQSKKQDKKTLNKLNDIDNKIKKTNELKSDLTELEKSEPEGIYLSGALLMFAGNKSYYLYGASSNDYRDFLPNHHMQFEMMKYAREHGATTYDFGGTDNDPDKDSEHYGLWAFKRVWGTYLSEKIGEFDYVLNQPLYHLVEKVKPRLTKAKIKISRKLKGK.

The protein belongs to the FemABX family.

It localises to the cytoplasm. It catalyses the reaction beta-D-GlcNAc-(1-&gt;4)-Mur2Ac(oyl-L-Ala-D-isoglutaminyl-L-Lys-D-Ala-D-Ala)-di-trans,octa-cis-undecaprenyl diphosphate + glycyl-tRNA(Gly) = beta-D-GlcNAc-(1-&gt;4)-Mur2Ac(oyl-L-Ala-D-isoglutaminyl-L-Lys-(N(6)-Gly)-D-Ala-D-Ala)-di-trans,octa-cis-undecaprenyl diphosphate + tRNA(Gly) + H(+). Catalyzes the incorporation of amino acid(s) into the interchain peptide bridge of peptidoglycan, using aminoacyl-tRNA as amino acid donor. In Staphylococcus epidermidis (strain ATCC 35984 / DSM 28319 / BCRC 17069 / CCUG 31568 / BM 3577 / RP62A), this protein is Lipid II:glycine glycyltransferase (femX).